A 780-amino-acid polypeptide reads, in one-letter code: MTHEEHHAAKSLGVGKAIAVLTSGGDAQGMNAAVRAVVRVGIYTGARVFFVHEGYQGLVDGGDNIREATWESVSMMLQLGGTVIGSARCKDFREREGRLRAAHNLVKRGITNLCVIGGDGSLTGADTFRSEWGDLLNDLQKAGKITAEEANKSSYLNIVGLVGSIDNDFCGTDMTIGTDSALHRIIEIVDAITTTAQSHQRTFVLEVMGRHCGYLALVTSLSCGADWVFIPECPPDDAWEEHLCRRLSETRTRGSRLNIIIVAEGAIDKNGQLITSENIKDLVVKRLGYDTRVTVLGHVQRGGTPSAFDRILGSRMGVEAVMALLEGTPDTPACVVSLSGNQAVRLPLMECVQVTKDVTKAMNEKRFDEAMKLRGRSFMNNWEVYKLLAHVRPPVTKSGSYTVAVMNVGAPTAGMNAAVRSTVRIGLIQGNRVLVVHDGFEGLAKGQIEEAGWSYVGGWTGQGGSKLGTKRTLPKKSFEQISANITKFNIQGLVIIGGFEAYTGGLELMEGRKQYDELCIPFVVIPATVSNNVPGSDFSVGADTALNTICMTCDRIKQSAAGTKRRVFIIETMGGYCGYLATMAGLAAGADAAYIFEEPFTIRDLQVNVEHLVQKMKTTVKRGLVLRNEKCNENYTTDFIFNLYSEEGKGIFDSRKNVLGHMQQGGSPTPLDRNFATKMGAKAMNWMSGKIKESYRNGRIFANTPDSGCVLGMRKRALVFQPVTELKEQTDFEHRIPKEQWWLKLRPILKILAKYEIDLDTSEHAHLEHITRKRSGEATI.

T2 carries the N-acetylthreonine modification. The interval 2–390 (THEEHHAAKS…NWEVYKLLAH (389 aa)) is N-terminal catalytic PFK domain 1. Residues G25, 88–89 (RC), and 118–121 (GDGS) contribute to the ATP site. D119 is a Mg(2+) binding site. Residues 164–166 (SID), R201, 208–210 (MGR), E264, R292, and 298–301 (HVQR) each bind substrate. The Proton acceptor role is filled by D166. S377 carries the post-translational modification Phosphoserine. Positions 391–401 (VRPPVTKSGSY) are interdomain linker. The segment at 402-780 (TVAVMNVGAP…TRKRSGEATI (379 aa)) is C-terminal regulatory PFK domain 2. Beta-D-fructose 2,6-bisphosphate contacts are provided by residues R471 and 528–532 (TVSNN). An O-linked (GlcNAc) serine glycan is attached at S530. N6-(2-hydroxyisobutyryl)lysine is present on K557. Beta-D-fructose 2,6-bisphosphate is bound by residues R566, 573–575 (MGG), E629, R655, and 661–664 (HMQQ). Phosphoserine is present on S667. R735 is a binding site for beta-D-fructose 2,6-bisphosphate. The residue at position 775 (S775) is a Phosphoserine.

The protein belongs to the phosphofructokinase type A (PFKA) family. ATP-dependent PFK group I subfamily. Eukaryotic two domain clade 'E' sub-subfamily. As to quaternary structure, homo- and heterotetramers. Phosphofructokinase (PFK) enzyme functions as a tetramer composed of different combinations of 3 types of subunits, called PFKM (M), PFKL (L) and PFKP (P). The composition of the PFK tetramer differs according to the tissue type it is present in. The kinetic and regulatory properties of the tetrameric enzyme are dependent on the subunit composition, hence can vary across tissues. Interacts (via C-terminus) with HK1 (via N-terminal spermatogenic cell-specific region). Requires Mg(2+) as cofactor. In terms of processing, glcNAcylation decreases enzyme activity.

It is found in the cytoplasm. It carries out the reaction beta-D-fructose 6-phosphate + ATP = beta-D-fructose 1,6-bisphosphate + ADP + H(+). Its pathway is carbohydrate degradation; glycolysis; D-glyceraldehyde 3-phosphate and glycerone phosphate from D-glucose: step 3/4. Its activity is regulated as follows. Allosterically activated by ADP, AMP, or fructose 2,6-bisphosphate, and allosterically inhibited by ATP or citrate. In terms of biological role, catalyzes the phosphorylation of D-fructose 6-phosphate to fructose 1,6-bisphosphate by ATP, the first committing step of glycolysis. The chain is ATP-dependent 6-phosphofructokinase, muscle type (PFKM) from Sus scrofa (Pig).